A 268-amino-acid polypeptide reads, in one-letter code: Tryptophan synthase alpha chain (268 aa).

Residues Glu-49 and Asp-60 each act as proton acceptor in the active site.

The protein belongs to the TrpA family. As to quaternary structure, tetramer of two alpha and two beta chains.

The enzyme catalyses (1S,2R)-1-C-(indol-3-yl)glycerol 3-phosphate + L-serine = D-glyceraldehyde 3-phosphate + L-tryptophan + H2O. Its pathway is amino-acid biosynthesis; L-tryptophan biosynthesis; L-tryptophan from chorismate: step 5/5. Its function is as follows. The alpha subunit is responsible for the aldol cleavage of indoleglycerol phosphate to indole and glyceraldehyde 3-phosphate. In Citrobacter koseri (strain ATCC BAA-895 / CDC 4225-83 / SGSC4696), this protein is Tryptophan synthase alpha chain.